A 503-amino-acid chain; its full sequence is Inosine-5'-monophosphate dehydrogenase 1 (503 aa).

Position 2 is an N-acetylserine (Ser-2). A CBS domain is found at 167–225; that stretch reads MKSCDSSDYCVPWEIDFEKLEFVLEDKQKGFVVLERDGETVNVVTKDDIQRVKGYPKSG. Residues 265–267 and 315–317 each bind NAD(+); these read DSS and GMG. Positions 317 and 319 each coordinate K(+). Residue Ser-320 participates in IMP binding. Cys-322 provides a ligand contact to K(+). The Thioimidate intermediate role is filled by Cys-322. IMP-binding positions include 355–357, 378–379, and 402–406; these read DGG, GS, and YRGMG. Arg-418 serves as the catalytic Proton acceptor. Position 430 (Gln-430) interacts with IMP. K(+) contacts are provided by Glu-489, Gly-490, and Gly-491.

Belongs to the IMPDH/GMPR family. In terms of assembly, homotetramer. K(+) serves as cofactor.

It is found in the cytoplasm. The catalysed reaction is IMP + NAD(+) + H2O = XMP + NADH + H(+). The protein operates within purine metabolism; XMP biosynthesis via de novo pathway; XMP from IMP: step 1/1. With respect to regulation, mycophenolic acid (MPA) is a non-competitive inhibitor that prevents formation of the closed enzyme conformation by binding to the same site as the amobile flap. In contrast, mizoribine monophosphate (MZP) is a competitive inhibitor that induces the closed conformation. MPA is a potent inhibitor of mammalian IMPDHs but a poor inhibitor of the bacterial enzymes. MZP is a more potent inhibitor of bacterial IMPDH. Catalyzes the conversion of inosine 5'-phosphate (IMP) to xanthosine 5'-phosphate (XMP), the first committed and rate-limiting step in the de novo synthesis of guanine nucleotides, and therefore plays an important role in the regulation of cell growth. In Arabidopsis thaliana (Mouse-ear cress), this protein is Inosine-5'-monophosphate dehydrogenase 1.